The primary structure comprises 295 residues: Methionine aminopeptidase (295 aa).

Substrate is bound at residue His63. A divalent metal cation is bound by residues Asp83, Asp94, and His154. A substrate-binding site is contributed by His162. A divalent metal cation-binding residues include Glu188 and Glu281.

The protein belongs to the peptidase M24A family. Methionine aminopeptidase archaeal type 2 subfamily. Monomer. The cofactor is Fe(2+). Requires Co(2+) as cofactor. It depends on Ni(2+) as a cofactor. Mn(2+) is required as a cofactor.

The catalysed reaction is Release of N-terminal amino acids, preferentially methionine, from peptides and arylamides.. Functionally, removes the N-terminal methionine from nascent proteins. The N-terminal methionine is often cleaved when the second residue in the primary sequence is small and uncharged (Met-Ala-, Cys, Gly, Pro, Ser, Thr, or Val). The protein is Methionine aminopeptidase of Thermococcus onnurineus (strain NA1).